Here is a 725-residue protein sequence, read N- to C-terminus: Polyribonucleotide nucleotidyltransferase (725 aa).

2 residues coordinate Mg(2+): Asp488 and Asp494. The KH domain occupies 555–614 (PRMITMKIHPDKIREVIGKGGSTIQALTKETGTTIDIQEDGTITIASTSTDGMAEAKRRI). The 69-residue stretch at 624 to 692 (GKIYAGTVLK…EKGRLRLSLK (69 aa)) folds into the S1 motif domain. The tract at residues 702 to 725 (ISPIAQGDAPAAAPAAPASPDQQQ) is disordered. A compositionally biased stretch (low complexity) spans 706–725 (AQGDAPAAAPAAPASPDQQQ).

The protein belongs to the polyribonucleotide nucleotidyltransferase family. It depends on Mg(2+) as a cofactor.

Its subcellular location is the cytoplasm. The catalysed reaction is RNA(n+1) + phosphate = RNA(n) + a ribonucleoside 5'-diphosphate. Involved in mRNA degradation. Catalyzes the phosphorolysis of single-stranded polyribonucleotides processively in the 3'- to 5'-direction. The chain is Polyribonucleotide nucleotidyltransferase from Cupriavidus metallidurans (strain ATCC 43123 / DSM 2839 / NBRC 102507 / CH34) (Ralstonia metallidurans).